Reading from the N-terminus, the 702-residue chain is MIRTFEMELGGRPFVVELGKVAELAQGSCMIKYGDTFVLVTACASKEPKEGLDFFPLSCDYEEKLYAVGKIPGGFIKRESRPSEKATLTARLIDRPIRPLFPKGYHNDVQVIATVLSVDQDCPPDISAMIGSSIALSVSNIPFMGPTASVSVGMIDGEYIVNPTSEQKELSELELIVSGTKDAVMMIEAGANELTEAQILDAIMFAHEEIKKIVTFIEHIVSEVGKPKSEVIVKETDSELLAEVVSFLDTKLANAIKTVDKTERNENIKAISAEALDYFEEKYEGRSKEVNTILSKQIKVETRKMITSEGIRPDNRKLDEIRPISSEVGILPRTHGTGLFTRGETQVLTVTTLGDLRDAQRIDGLGEEDEKRYMHHYNFPPYSVGETRFMRGPSRREIGHGALVERALKPMIPCKEDFPYAIRLVSEVLACNGSSSQASVCGSTLSLMDAGVPIKGMVAGIAMGLIKEEGQIAILSDIQGMEDALGDMDLKVAGTENGITALQMDIKIAGIDRNIMETALAQAKIGRTHILNKMKEAITSPRTELSAYAPQVTKLKVHPDKVREVIGAGGKVINKIIDETGVKINIENDGTIYIAAPDQESARVALEMIELIVKDPVVGEVYTGKVIKIMDFGAFVEILPGKEGLVHISNLAHERVAKVADVLAEGDLIEVKLMEINPQGKIGLSRKALLPKPEKEAPNKVE.

Positions 483 and 489 each coordinate Mg(2+). Positions 550–609 (PQVTKLKVHPDKVREVIGAGGKVINKIIDETGVKINIENDGTIYIAAPDQESARVALEMI) constitute a KH domain. Residues 619 to 687 (GEVYTGKVIK…PQGKIGLSRK (69 aa)) enclose the S1 motif domain.

It belongs to the polyribonucleotide nucleotidyltransferase family. Requires Mg(2+) as cofactor.

It localises to the cytoplasm. It catalyses the reaction RNA(n+1) + phosphate = RNA(n) + a ribonucleoside 5'-diphosphate. In terms of biological role, involved in mRNA degradation. Catalyzes the phosphorolysis of single-stranded polyribonucleotides processively in the 3'- to 5'-direction. In Alkaliphilus metalliredigens (strain QYMF), this protein is Polyribonucleotide nucleotidyltransferase 1.